The primary structure comprises 261 residues: Triosephosphate isomerase (261 aa).

10–12 (NWK) serves as a coordination point for substrate. His100 acts as the Electrophile in catalysis. Glu172 functions as the Proton acceptor in the catalytic mechanism. Substrate contacts are provided by residues Gly178, Ser218, and 239-240 (GG).

Belongs to the triosephosphate isomerase family. In terms of assembly, homodimer.

It localises to the cytoplasm. It catalyses the reaction D-glyceraldehyde 3-phosphate = dihydroxyacetone phosphate. It participates in carbohydrate biosynthesis; gluconeogenesis. The protein operates within carbohydrate degradation; glycolysis; D-glyceraldehyde 3-phosphate from glycerone phosphate: step 1/1. Its function is as follows. Involved in the gluconeogenesis. Catalyzes stereospecifically the conversion of dihydroxyacetone phosphate (DHAP) to D-glyceraldehyde-3-phosphate (G3P). The sequence is that of Triosephosphate isomerase from Mycolicibacterium paratuberculosis (strain ATCC BAA-968 / K-10) (Mycobacterium paratuberculosis).